The following is a 155-amino-acid chain: Protein-export protein SecB (155 aa).

This sequence belongs to the SecB family. As to quaternary structure, homotetramer, a dimer of dimers. One homotetramer interacts with 1 SecA dimer.

The protein resides in the cytoplasm. Functionally, one of the proteins required for the normal export of preproteins out of the cell cytoplasm. It is a molecular chaperone that binds to a subset of precursor proteins, maintaining them in a translocation-competent state. It also specifically binds to its receptor SecA. The chain is Protein-export protein SecB from Psychromonas ingrahamii (strain DSM 17664 / CCUG 51855 / 37).